Consider the following 262-residue polypeptide: Serine/arginine-rich SC35-like splicing factor SCL30A (262 aa).

2 disordered regions span residues 1 to 38 and 115 to 262; these read MRGR…LPTS and ENRK…SPSQ. A phosphoserine mark is found at serine 9 and serine 20. An RRM domain is found at 37 to 115; sequence TSLLVRNLRH…RELTVVFAEE (79 aa). A compositionally biased stretch (basic and acidic residues) spans 115-140; sequence ENRKKPTEMRTRDRGGRSNRFQDRRR. A compositionally biased stretch (basic residues) spans 150 to 161; that stretch reads PPRRGRRSRSRS. A phosphoserine mark is found at serine 166, serine 174, serine 176, and serine 178. Positions 180–190 are enriched in basic and acidic residues; sequence QDRRYEKERSY. Serine 191 and serine 193 each carry phosphoserine. The span at 209-226 shows a compositional bias: basic residues; the sequence is VKSHSRSPRRSVSPRKNR. Low complexity predominate over residues 234–246; sequence RSQSPVPRQSRSP. 3 positions are modified to phosphoserine: serine 235, serine 259, and serine 261.

This sequence belongs to the splicing factor SR family. SCL subfamily. In terms of assembly, component of the spliceosome. Interacts with SNRNP35, CYP59 and RS2Z33.

The protein resides in the nucleus speckle. In terms of biological role, involved in intron recognition and spliceosome assembly. Binds probably to multiple 5'-GAAG-3' repeats found in its third intron, suggesting autoregulation of alternative splicing. May be necessary for accurate splicing of the 3' region of introns. In Arabidopsis thaliana (Mouse-ear cress), this protein is Serine/arginine-rich SC35-like splicing factor SCL30A (SCL30A).